The chain runs to 332 residues: Azadirone synthase LFS (332 aa).

One can recognise a Fe2OG dioxygenase domain in the interval 181–286 (ANANYTNMFH…RYSTGTFICP (106 aa)). His208, Asp210, and His269 together coordinate Fe cation. Arg277 contacts 2-oxoglutarate.

This sequence belongs to the iron/ascorbate-dependent oxidoreductase family. Requires Fe(2+) as cofactor. As to expression, mainly expressed in petioles and, to a lower extent, in roots.

The enzyme catalyses (1S,3bR,4R,5aR,9aR,9bR,11aS)-1-(1-hydroxy-4-oxobutan-2-yl)-3b,6,6,9a,11a-pentamethyl-7-oxo-1H,2H,3bH,4H,5H,5aH,6H,7H,9aH,9bH,10H,11H,11aH-cyclopenta[a]phenanthren-4-yl acetate + 2-oxoglutarate + O2 = azadirone + succinate + CO2 + 2 H2O. It participates in secondary metabolite biosynthesis; terpenoid biosynthesis. Its function is as follows. 2-oxoglutarate-Fe(II) type oxidoreductase involved in the biosynthesis of limonoids triterpene natural products such as azadirachtin, an antifeedant widely used as bioinsecticide, and possessing many medicinal applications including anti-tumoral, anti-malarial, anti-rheumatic, antibacterial, anti-inflammatory, anti-pyretic and diuretic effects. Catalyzes the formation of azadirone. This is Azadirone synthase LFS from Melia azedarach (Chinaberry tree).